Reading from the N-terminus, the 181-residue chain is MFSAFRDTASIGFSDTHQDEKTLRFLKKQISQFIKHLKEYYPNNELTKKLVMKYSDVQLLPYTKGATKDTYTSGLFDHTTGVIKIAPRDGLGNVRDEQSLNKSICHELAHGTRVKYPGESSHSDEWKDAWKTFLKIAADELGWKIEVPCSSVSFYGLTKDDCENCVWDQDPETCPKTAKLA.

As to quaternary structure, interacts with the major capsid protein.

The protein localises to the virion. One of the minor capsid proteins that constitute a network internal to the major capsid proteins and outside the lipid membrane. The minor capsid proteins glue and stabilize the capsomers. The chain is Minor capsid protein P4 from Chlorella (PBCV-1).